Here is a 424-residue protein sequence, read N- to C-terminus: DNA repair protein Rad60 (424 aa).

Y26 carries the phosphotyrosine modification. Phosphoserine is present on residues S32 and S34. Positions 45-177 (LPKKSTKTGK…LTTTTSNSAS (133 aa)) are disordered. Over residues 48 to 57 (KSTKTGKRKN) the composition is skewed to basic residues. The segment covering 77-93 (QAEHKAVEPEEDMRTER) has biased composition (basic and acidic residues). Residue S96 is modified to Phosphoserine. The segment covering 104 to 123 (EMEKKNGQQSDVEKHAKEND) has biased composition (basic and acidic residues). A compositionally biased stretch (basic residues) spans 156 to 166 (KPKKRGQKKRT). Low complexity predominate over residues 167-177 (SLTTTTSNSAS).

In terms of assembly, forms a complex with dgrn; likely required for localization to the nuclear periphery. Interacts with the SMC5-SMC6 complex members SMC5 and SMC6/jnj following ionizing radiation (IR) to induce DNA damage. Interaction between the SMC5-SMC6 complex and the dgrn-Rad60 complex, may stabilize the association of heterochromatic DSBs with the nuclear periphery.

Its subcellular location is the nucleus. It is found in the nucleoplasm. Its function is as follows. Required for repair of DNA double strand breaks which occur during replication or are induced by ionizing radiation (IR). Functions with dgrn and downstream of the SMC5-SMC6 complex to regulate strand break repair. Likely functions by stabilizing the association of heterochromatic double strand breaks (DSBs) with the nuclear periphery as part of the homologous recombination (HR) repair process. The sequence is that of DNA repair protein Rad60 from Drosophila melanogaster (Fruit fly).